We begin with the raw amino-acid sequence, 128 residues long: Transcription antitermination protein NusB (128 aa).

Belongs to the NusB family.

In terms of biological role, involved in transcription antitermination. Required for transcription of ribosomal RNA (rRNA) genes. Binds specifically to the boxA antiterminator sequence of the ribosomal RNA (rrn) operons. The sequence is that of Transcription antitermination protein NusB from Exiguobacterium sp. (strain ATCC BAA-1283 / AT1b).